The sequence spans 434 residues: Nicotinate phosphoribosyltransferase (434 aa).

Phosphohistidine; by autocatalysis is present on His242.

The protein belongs to the NAPRTase family. Transiently phosphorylated on a His residue during the reaction cycle. Phosphorylation strongly increases the affinity for substrates and increases the rate of nicotinate D-ribonucleotide production. Dephosphorylation regenerates the low-affinity form of the enzyme, leading to product release.

It carries out the reaction nicotinate + 5-phospho-alpha-D-ribose 1-diphosphate + ATP + H2O = nicotinate beta-D-ribonucleotide + ADP + phosphate + diphosphate. It functions in the pathway cofactor biosynthesis; NAD(+) biosynthesis; nicotinate D-ribonucleotide from nicotinate: step 1/1. Functionally, catalyzes the synthesis of beta-nicotinate D-ribonucleotide from nicotinate and 5-phospho-D-ribose 1-phosphate at the expense of ATP. The protein is Nicotinate phosphoribosyltransferase of Bartonella tribocorum (strain CIP 105476 / IBS 506).